The sequence spans 424 residues: Phosphoribosylamine--glycine ligase (424 aa).

The region spanning 111–312 (KAFVKECGIK…LLDLCLATAK (202 aa)) is the ATP-grasp domain. 137-189 (IQNASFPLVIKALNKNTSIVYQEEEAIKILEDAFKQSNEPVIIEPFLEGFELS) is a binding site for ATP.

Belongs to the GARS family.

The enzyme catalyses 5-phospho-beta-D-ribosylamine + glycine + ATP = N(1)-(5-phospho-beta-D-ribosyl)glycinamide + ADP + phosphate + H(+). It functions in the pathway purine metabolism; IMP biosynthesis via de novo pathway; N(1)-(5-phospho-D-ribosyl)glycinamide from 5-phospho-alpha-D-ribose 1-diphosphate: step 2/2. The sequence is that of Phosphoribosylamine--glycine ligase (purD) from Helicobacter pylori (strain ATCC 700392 / 26695) (Campylobacter pylori).